The primary structure comprises 351 residues: Minor outer capsid protein P9 (351 aa).

The interval 245–310 is disordered; it reads GGVPAALPQP…VPSGNVSARG (66 aa). The span at 285 to 297 shows a compositional bias: basic and acidic residues; sequence MIRKKVETSKDGP.

It belongs to the phytoreovirus minor outer capsid protein P9 family.

It is found in the virion. The protein localises to the host cytoplasm. Minor outer capsid protein. The sequence is that of Minor outer capsid protein P9 from Rice dwarf virus (isolate Akita) (RDV).